The following is a 223-amino-acid chain: MSATYQLALQQLTDSALPTGAFAHSLGFESYIHRGLVRDESTFSTWLQAFVSQQLSYSDGLALRFLFEGVDVGLLDGVLSAQLLAREVREASLKMGGRLLEIGGEVFPSAELEAYRGLVRAGSASGHQPLAFGVIARSLGVPLEEALSAYLFATVTSLTQNAVRAIPLGQNAGQRVLRQAHDAVAAAIHVVAQLCWDDFGAVSPGLEISQMRHERQRARMFMS.

It belongs to the UreF family. UreD, UreF and UreG form a complex that acts as a GTP-hydrolysis-dependent molecular chaperone, activating the urease apoprotein by helping to assemble the nickel containing metallocenter of UreC. The UreE protein probably delivers the nickel.

It localises to the cytoplasm. Its function is as follows. Required for maturation of urease via the functional incorporation of the urease nickel metallocenter. The sequence is that of Urease accessory protein UreF from Paenarthrobacter aurescens (strain TC1).